The primary structure comprises 501 residues: Glycerol kinase (501 aa).

T11 serves as a coordination point for ADP. ATP-binding residues include T11, T12, and S13. Sn-glycerol 3-phosphate is bound at residue T11. Residue R15 coordinates ADP. R81, E82, Y133, and D242 together coordinate sn-glycerol 3-phosphate. Glycerol contacts are provided by R81, E82, Y133, D242, and Q243. 2 residues coordinate ADP: T264 and G307. 4 residues coordinate ATP: T264, G307, Q311, and G409. ADP is bound by residues G409 and N413.

The protein belongs to the FGGY kinase family.

It carries out the reaction glycerol + ATP = sn-glycerol 3-phosphate + ADP + H(+). Its pathway is polyol metabolism; glycerol degradation via glycerol kinase pathway; sn-glycerol 3-phosphate from glycerol: step 1/1. Its activity is regulated as follows. Inhibited by fructose 1,6-bisphosphate (FBP). In terms of biological role, key enzyme in the regulation of glycerol uptake and metabolism. Catalyzes the phosphorylation of glycerol to yield sn-glycerol 3-phosphate. The polypeptide is Glycerol kinase (Borrelia garinii subsp. bavariensis (strain ATCC BAA-2496 / DSM 23469 / PBi) (Borreliella bavariensis)).